A 447-amino-acid chain; its full sequence is Glutamate-1-semialdehyde 2,1-aminomutase (447 aa).

K277 bears the N6-(pyridoxal phosphate)lysine mark.

It belongs to the class-III pyridoxal-phosphate-dependent aminotransferase family. HemL subfamily. As to quaternary structure, homodimer. It depends on pyridoxal 5'-phosphate as a cofactor.

Its subcellular location is the cytoplasm. It catalyses the reaction (S)-4-amino-5-oxopentanoate = 5-aminolevulinate. Its pathway is porphyrin-containing compound metabolism; protoporphyrin-IX biosynthesis; 5-aminolevulinate from L-glutamyl-tRNA(Glu): step 2/2. This Arthrobacter sp. (strain FB24) protein is Glutamate-1-semialdehyde 2,1-aminomutase.